Consider the following 129-residue polypeptide: Small ribosomal subunit protein uS11 (129 aa).

This sequence belongs to the universal ribosomal protein uS11 family. In terms of assembly, part of the 30S ribosomal subunit. Interacts with proteins S7 and S18. Binds to IF-3.

Its function is as follows. Located on the platform of the 30S subunit, it bridges several disparate RNA helices of the 16S rRNA. Forms part of the Shine-Dalgarno cleft in the 70S ribosome. The polypeptide is Small ribosomal subunit protein uS11 (Methylobacterium nodulans (strain LMG 21967 / CNCM I-2342 / ORS 2060)).